Consider the following 286-residue polypeptide: Phosphate import ATP-binding protein PstB (286 aa).

The interval 1-27 (MEPKETLRQRWPGRGRTEETGAMKKSD) is disordered. Residues 15 to 27 (GRTEETGAMKKSD) show a composition bias toward basic and acidic residues. An ABC transporter domain is found at 33–281 (MTVEHLNMYY…PDRKETEDYV (249 aa)). 65–72 (GPSGCGKS) serves as a coordination point for ATP.

The protein belongs to the ABC transporter superfamily. Phosphate importer (TC 3.A.1.7) family. As to quaternary structure, the complex is composed of two ATP-binding proteins (PstB), two transmembrane proteins (PstC and PstA) and a solute-binding protein (PstS).

The protein resides in the cell membrane. It catalyses the reaction phosphate(out) + ATP + H2O = ADP + 2 phosphate(in) + H(+). In terms of biological role, part of the ABC transporter complex PstSACB involved in phosphate import. Responsible for energy coupling to the transport system. The sequence is that of Phosphate import ATP-binding protein PstB from Rubrobacter xylanophilus (strain DSM 9941 / JCM 11954 / NBRC 16129 / PRD-1).